A 321-amino-acid chain; its full sequence is MVDESKLQCYHKGCGLLFDPKENDNEACTYHPGGPYFHDAYKIWTCCDKKSTDFGTWMNYKGCTRGKHSNEKPVDIVKVAAVKEIRPEKEEDVIVWKGLNKSGKLDSKDATKRIEQNLNVEVTPGATAAIEKKLKEISEAAQSADIQIGAPCRNNGCSTEFDGSKNKENCQHHPGAAIFHEGMKYWSCCNKKTSNFGAFLEQVGCTSGEHKFRNNEIVSKFREDWFSSNGFVTINVYCRGALPETANIVSDGHTVRVSMKHGFGNASVDLDYDLWDEVIPEESRVVIGERKVEISLKQKHGTGWPRLKFDPELDAKNDEEA.

Zn(2+) contacts are provided by Cys-9, Cys-14, Cys-28, His-31, Cys-46, Cys-47, Cys-63, His-68, Cys-152, Cys-157, Cys-170, His-173, Cys-188, Cys-189, Cys-205, and His-210. CHORD domains follow at residues 9–68 and 152–210; these read CYHK…RGKH and CRNN…SGEH. One can recognise a CS domain in the interval 218–308; sequence VSKFREDWFS…KHGTGWPRLK (91 aa).

Its function is as follows. Regulates centrosome duplication. Controls the secretion of the tyrosine kinase receptor let-23/EGFR from the endoplasmic reticulum and is required for the localization of let-23/EGFR to the plasma membrane of vulval precursor cells. It thus plays a role in positively regulating let/EGFR signaling, and anchor cell and vulval precursor cell alignment. Plays a role in vulval development and morphogenesis. This Caenorhabditis elegans protein is Cysteine and histidine-rich domain-containing protein 1.